We begin with the raw amino-acid sequence, 101 residues long: Non-structural protein NS-S (101 aa).

Belongs to the orthobunyavirus NS-S protein family.

Functionally, inhibits host transcriptional machinery, by producing modifications to the phosphorylation state of the C-terminal domain (CTD) of RNA polymerase II. Inhibits phosphorylation at serine 2 in the heptapeptide repeat (YSPTSPS) of the CTD of RNA polymerase II, suggesting that the elongation step of transcription and/or 3'-end processing is prevented. Inhibition of host transcription machinery leads to shut off of host cell protein synthesis and inhibition of the host innate immune response. NSs also seems to be involved in the nuclear relocalization of host PABP1. This chain is Non-structural protein NS-S (N), found in Bunyamwera virus (BUNV).